The chain runs to 902 residues: Cytosolic 10-formyltetrahydrofolate dehydrogenase (902 aa).

The hydrolase domain stretch occupies residues 1-310 (MKIAVIGQSL…LASNFFKGAA (310 aa)). The residue at position 9 (S9) is a Phosphoserine. Position 38 is an N6-succinyllysine (K38). Residue 88 to 90 (QFI) participates in (6R)-10-formyltetrahydrofolate binding. H106 acts as the Proton donor in catalysis. D142 lines the (6R)-10-formyltetrahydrofolate pocket. Residues 318 to 395 (EAELVTAEAV…DFIQLLVRKL (78 aa)) enclose the Carrier domain. O-(pantetheine 4'-phosphoryl)serine is present on S354. The segment at 417-902 (TIRIPHQLFI…LRVKTVTFEY (486 aa)) is aldehyde dehydrogenase domain. NADP(+)-binding positions include 571-573 (IPW) and 597-600 (KPAQ). S629 and S631 each carry phosphoserine. Residues 630–635 (GSLVGQ) and 650–651 (GS) contribute to the NADP(+) site. K660 is subject to N6-succinyllysine. E673 (proton acceptor) is an active-site residue. 673–674 (EL) contacts NADP(+). The active-site Proton donor is C707. Residue K757 participates in NADP(+) binding. Residue K767 is modified to N6-succinyllysine. 804–806 (ESF) contributes to the NADP(+) binding site. A Phosphoserine modification is found at S825. An N6-acetyllysine modification is found at K882.

The protein in the N-terminal section; belongs to the GART family. In the C-terminal section; belongs to the aldehyde dehydrogenase family. ALDH1L subfamily. As to quaternary structure, homotetramer. Post-translationally, phosphopantetheinylation at Ser-354 by AASDHPPT is required for the formyltetrahydrofolate dehydrogenase activity.

It is found in the cytoplasm. The protein resides in the cytosol. It carries out the reaction (6R)-10-formyltetrahydrofolate + NADP(+) + H2O = (6S)-5,6,7,8-tetrahydrofolate + CO2 + NADPH + H(+). Functionally, cytosolic 10-formyltetrahydrofolate dehydrogenase that catalyzes the NADP(+)-dependent conversion of 10-formyltetrahydrofolate to tetrahydrofolate and carbon dioxide. May also have an NADP(+)-dependent aldehyde dehydrogenase activity towards formaldehyde, acetaldehyde, propionaldehyde, and benzaldehyde. This chain is Cytosolic 10-formyltetrahydrofolate dehydrogenase, found in Pongo abelii (Sumatran orangutan).